The sequence spans 279 residues: MVKVVPLRFITYDPLKDPSKMIYRRPISKPVKAFKGFFSEFLGTLYLVYFCGGSVCAAFAVAGDSAARALLGGLIQGMALAALIWAVSGVSGCNLNPAVTLANLLSGRVGLIDSLYYVAAQILGCIAGAGILYGCLPNMYRIDLGVPHLAPGMNTGQAFLMEMMLTSILCLCVLGTSVFNVWDRRLNRIAPFAIGLALFIGVAIGFNFSGGALNPVRVLGPSIISGVWSHHWVYWLGPIVGAILAAFIYRCLLQERFDVIERPGYIAPLIDPSTAVSSY.

At 1 to 40 (MVKVVPLRFITYDPLKDPSKMIYRRPISKPVKAFKGFFSE) the chain is on the cytoplasmic side. The helical transmembrane segment at 41–61 (FLGTLYLVYFCGGSVCAAFAV) threads the bilayer. At 62-69 (AGDSAARA) the chain is on the extracellular side. Residues 70 to 90 (LLGGLIQGMALAALIWAVSGV) form a helical membrane-spanning segment. Residues 91-114 (SGCNLNPAVTLANLLSGRVGLIDS) lie on the Cytoplasmic side of the membrane. The NPA 1 motif lies at 96 to 98 (NPA). Residues 115 to 135 (LYYVAAQILGCIAGAGILYGC) form a helical membrane-spanning segment. Topologically, residues 136–158 (LPNMYRIDLGVPHLAPGMNTGQA) are extracellular. A helical membrane pass occupies residues 159–179 (FLMEMMLTSILCLCVLGTSVF). Residues 180 to 188 (NVWDRRLNR) lie on the Cytoplasmic side of the membrane. A helical transmembrane segment spans residues 189–209 (IAPFAIGLALFIGVAIGFNFS). Over 210 to 227 (GGALNPVRVLGPSIISGV) the chain is Extracellular. Positions 214–216 (NPV) match the NPA 2 motif. A helical transmembrane segment spans residues 228 to 248 (WSHHWVYWLGPIVGAILAAFI). The Cytoplasmic portion of the chain corresponds to 249–279 (YRCLLQERFDVIERPGYIAPLIDPSTAVSSY).

This sequence belongs to the MIP/aquaporin (TC 1.A.8) family.

Its subcellular location is the cell membrane. Its function is as follows. May form a water-specific channel. Required for prolonged spore survival on fruiting bodies. This chain is Aquaporin A (aqpA), found in Dictyostelium discoideum (Social amoeba).